The primary structure comprises 352 residues: Phosphatase Herzog (352 aa).

The prion-like domain necessary for both protein assembly and membrane targeting stretch occupies residues 1–102 (MDATSIITQV…PLPDQQRYLL (102 aa)). The mediates substrate recognition stretch occupies residues 103-267 (PQVRLTDMHR…ELIPLFEKLS (165 aa)). An FCP1 homology domain is found at 108-266 (TDMHRKCMVI…RELIPLFEKL (159 aa)). 2 disordered regions span residues 284-310 (NNQTNQQQHPQELQQAPNQLHQQLQQQ) and 332-352 (TMLNQQQTSPPSPQSELLQKT).

Monomer. Forms higher-order protein aggregates with amyloid-like features during gastrulation. Interacts with babo, dah, Irk1, pch2, Ras64B, sax and Src64B.

It localises to the cell membrane. It carries out the reaction O-phospho-L-seryl-[protein] + H2O = L-seryl-[protein] + phosphate. Its activity is regulated as follows. Phosphatase activity requires amyloid-like aggregation on the membrane. Functionally, prion-like membrane-associated phosphatase. Phosphatase activity depends on amyloid-like assembly at the membrane. Might have a role in establishment of segment polarity in embryos. This is Phosphatase Herzog from Drosophila melanogaster (Fruit fly).